A 236-amino-acid chain; its full sequence is Sugar fermentation stimulation protein homolog (236 aa).

The protein belongs to the SfsA family.

The polypeptide is Sugar fermentation stimulation protein homolog (Gloeobacter violaceus (strain ATCC 29082 / PCC 7421)).